The sequence spans 859 residues: Autoinducer 2 sensor kinase/phosphatase LuxQ (859 aa).

2 helical membrane passes run 15–35 (ATLI…GIFI) and 280–300 (IQHI…ALMS). The Histidine kinase domain maps to 489-711 (KMSHEIRTPI…TFVITLPVKD (223 aa)). Residue His-492 is modified to Phosphohistidine; by autocatalysis. A Response regulatory domain is found at 736–851 (KVLLVEDNHT…ALHEAFVDFK (116 aa)). Asp-785 bears the 4-aspartylphosphate mark.

As to quaternary structure, binds the complex formed by AI-2 and LuxP.

The protein resides in the cell inner membrane. The catalysed reaction is ATP + protein L-histidine = ADP + protein N-phospho-L-histidine.. In terms of biological role, at low cell density, in absence of AI-2 (autoinducer 2), LuxQ has a kinase activity and autophosphorylates on a histidine residue. The phosphoryl group is then transferred to an aspartate residue in the response regulator domain. The phosphoryl group is transferred to LuxU, and ultimately to LuxO. At high cell density, in the presence of AI-2, the kinase activity is inactivated, and the response regulator domain has a phosphatase activity. The sequence is that of Autoinducer 2 sensor kinase/phosphatase LuxQ (luxQ) from Vibrio harveyi (Beneckea harveyi).